We begin with the raw amino-acid sequence, 526 residues long: Estrogen receptor beta (526 aa).

Residues 1-145 are modulating; that stretch reads MDIKNSPSNL…SPSSKRDAHF (145 aa). Phosphoserine; by MAPK is present on residues serine 84 and serine 102. NR C4-type zinc fingers lie at residues 146-166 and 182-206; these read CAVCSDYASGYHYGVWSCEGC and CPATNQCTIDKNRRKSCQACRLRKC. Positions 146-211 form a DNA-binding region, nuclear receptor; sequence CAVCSDYASG…RLRKCYEVGM (66 aa). The NR LBD domain maps to 261–494; the sequence is SPEQLVLTLL…DLLLEMLNAH (234 aa). The interval 502–526 is disordered; sequence LVTGSERSRMEESESKEGSQKPQAQ. Residues 507 to 520 show a composition bias toward basic and acidic residues; it reads ERSRMEESESKEGS.

This sequence belongs to the nuclear hormone receptor family. NR3 subfamily. Binds DNA as a homodimer. Can form a heterodimer with ESR1. Interacts with NCOA1, NCOA3, NCOA5 and NCOA6 coactivators, leading to a strong increase of transcription of target genes. Interacts with UBE1C and AKAP13. Interacts with DNTTIP2. Interacts with CCDC62 in the presence of estradiol/E2; this interaction seems to enhance the transcription of target genes. Interacts with DNAAF4. Interacts with PRMT2. Interacts with CCAR2 (via N-terminus) in a ligand-independent manner. Interacts with RBM39, in the presence of estradiol (E2). Interacts with STUB1/CHIP. Post-translationally, phosphorylation at Ser-84 and Ser-102 recruits NCOA1.

It localises to the nucleus. Nuclear hormone receptor. Binds estrogens with an affinity similar to that of ESR1/ER-alpha, and activates expression of reporter genes containing estrogen response elements (ERE) in an estrogen-dependent manner. The sequence is that of Estrogen receptor beta (ESR2) from Sus scrofa (Pig).